The primary structure comprises 397 residues: Chorismate synthase (397 aa).

NADP(+) contacts are provided by arginine 40 and arginine 46. Residues 129-131, 257-258, glycine 302, 317-321, and arginine 343 each bind FMN; these read RSS, QA, and KPISS.

Belongs to the chorismate synthase family. As to quaternary structure, homotetramer. FMNH2 is required as a cofactor.

It carries out the reaction 5-O-(1-carboxyvinyl)-3-phosphoshikimate = chorismate + phosphate. Its pathway is metabolic intermediate biosynthesis; chorismate biosynthesis; chorismate from D-erythrose 4-phosphate and phosphoenolpyruvate: step 7/7. Its function is as follows. Catalyzes the anti-1,4-elimination of the C-3 phosphate and the C-6 proR hydrogen from 5-enolpyruvylshikimate-3-phosphate (EPSP) to yield chorismate, which is the branch point compound that serves as the starting substrate for the three terminal pathways of aromatic amino acid biosynthesis. This reaction introduces a second double bond into the aromatic ring system. In Chlorobium limicola (strain DSM 245 / NBRC 103803 / 6330), this protein is Chorismate synthase.